The chain runs to 870 residues: DNA mismatch repair protein MutS (870 aa).

ATP is bound at residue Gly-629–Ser-636.

It belongs to the DNA mismatch repair MutS family.

Functionally, this protein is involved in the repair of mismatches in DNA. It is possible that it carries out the mismatch recognition step. This protein has a weak ATPase activity. This chain is DNA mismatch repair protein MutS, found in Polaromonas naphthalenivorans (strain CJ2).